A 144-amino-acid polypeptide reads, in one-letter code: Small ribosomal subunit protein bS6 (144 aa).

Positions 97-144 (DTEQSLIMKSKDEKGDKPERSERRRRDDEEVDAAPAATDTDGDNAEAA) are disordered. Residues 105 to 124 (KSKDEKGDKPERSERRRRDD) are compositionally biased toward basic and acidic residues.

The protein belongs to the bacterial ribosomal protein bS6 family.

Functionally, binds together with bS18 to 16S ribosomal RNA. This is Small ribosomal subunit protein bS6 from Xanthomonas campestris pv. campestris (strain B100).